The chain runs to 150 residues: 3-dehydroquinate dehydratase (150 aa).

The Proton acceptor role is filled by Tyr-26. 3 residues coordinate substrate: Asn-77, His-83, and Asp-90. His-103 (proton donor) is an active-site residue. Substrate is bound by residues 104–105 (LS) and Arg-114.

Belongs to the type-II 3-dehydroquinase family. As to quaternary structure, homododecamer.

It carries out the reaction 3-dehydroquinate = 3-dehydroshikimate + H2O. It participates in metabolic intermediate biosynthesis; chorismate biosynthesis; chorismate from D-erythrose 4-phosphate and phosphoenolpyruvate: step 3/7. Catalyzes a trans-dehydration via an enolate intermediate. This Citrobacter koseri (strain ATCC BAA-895 / CDC 4225-83 / SGSC4696) protein is 3-dehydroquinate dehydratase.